We begin with the raw amino-acid sequence, 58 residues long: Photosystem II reaction center protein K (58 aa).

Positions 1 to 21 (MFNAYLDTVLDLSANGTVILA) are excised as a propeptide. Residues 29–49 (IFDPIVDVMPIIPVFFLLLAF) form a helical membrane-spanning segment.

Belongs to the PsbK family. In terms of assembly, PSII is composed of 1 copy each of membrane proteins PsbA, PsbB, PsbC, PsbD, PsbE, PsbF, PsbH, PsbI, PsbJ, PsbK, PsbL, PsbM, PsbT, PsbX, PsbY, PsbZ, Psb30/Ycf12, at least 3 peripheral proteins of the oxygen-evolving complex and a large number of cofactors. It forms dimeric complexes.

The protein localises to the plastid. It localises to the chloroplast thylakoid membrane. In terms of biological role, one of the components of the core complex of photosystem II (PSII). PSII is a light-driven water:plastoquinone oxidoreductase that uses light energy to abstract electrons from H(2)O, generating O(2) and a proton gradient subsequently used for ATP formation. It consists of a core antenna complex that captures photons, and an electron transfer chain that converts photonic excitation into a charge separation. This is Photosystem II reaction center protein K from Staurastrum punctulatum (Green alga).